Reading from the N-terminus, the 643-residue chain is Protein tramtrack, beta isoform (643 aa).

The BTB domain occupies 33–98 (TDVTLAVEGQ…MYRGEVSVDQ (66 aa)). Disordered regions lie at residues 118-148 (EVND…PQLQ) and 171-300 (ANAG…GLDT). Lys-123 is covalently cross-linked (Glycyl lysine isopeptide (Lys-Gly) (interchain with G-Cter in ubiquitin)). Positions 125–145 (SPAAAAAGAGATGSESTATTP) are enriched in low complexity. The span at 176-187 (TPTLPVQPSLLS) shows a compositional bias: polar residues. Residues 192-201 (PKRKRGRPRK) show a composition bias toward basic residues. Residue Lys-201 forms a Glycyl lysine isopeptide (Lys-Gly) (interchain with G-Cter in ubiquitin) linkage. The segment covering 254–285 (HTDDLNESRDSLPSKRSKNSKDHRVVSHHEDN) has biased composition (basic and acidic residues). Glycyl lysine isopeptide (Lys-Gly) (interchain with G-Cter in ubiquitin) cross-links involve residues Lys-355, Lys-397, Lys-418, Lys-457, Lys-478, and Lys-480. 2 C2H2-type zinc fingers span residues 508–531 (YRCK…VTSH) and 538–561 (YPCP…KIIH). A Glycyl lysine isopeptide (Lys-Gly) (interchain with G-Cter in ubiquitin) cross-link involves residue Lys-545. A disordered region spans residues 584 to 643 (GVSGASTPPPPDLSGQNSNQSLPATSNALSTSSSSSTSSSSGSLGPLTTSAPPAPAAAAQ). Positions 604–643 (SLPATSNALSTSSSSSTSSSSGSLGPLTTSAPPAPAAAAQ) are enriched in low complexity.

As to quaternary structure, can form homodimers. Interacts with Trl in vivo via the BTB domain. Interacts with phyl. Interacts with Usp47. In terms of processing, polyubiquitinated by sina. Polyubiquitin linkage is mainly through 'Lys-48', but linkage through 'Lys-63' also occurs. Deubiquitination by Usp47 leads to its stabilization.

Its subcellular location is the nucleus. Functionally, binds to a number of sites in the transcriptional regulatory region of ftz. Isoform beta is required to repress inappropriate segmentation gene transcription and repress genes incompatible with development of photoreceptor cell fates. Probable repressor of the transcription of the segmentation genes ftz, eve, h, odd, run, and en. Inhibits Trl-dependent activation of eve. May bind to the region AGGGC/TGG. Degradation of ttk is directed by binding of sinah or sina, via the adapter molecule phyl which binds to the BTB domain of ttk. A second method of degradation exists that is phyl-independent, this is mediated by recognition of motifs in the C-terminus of ttk. The chain is Protein tramtrack, beta isoform (ttk) from Drosophila melanogaster (Fruit fly).